A 526-amino-acid polypeptide reads, in one-letter code: Cytochrome P450 4e2 (526 aa).

Heme-binding residues include Glu307 and Cys444.

The protein belongs to the cytochrome P450 family. Heme serves as cofactor.

It localises to the endoplasmic reticulum membrane. The protein localises to the microsome membrane. Functionally, may be involved in the metabolism of insect hormones and in the breakdown of synthetic insecticides. This chain is Cytochrome P450 4e2 (Cyp4e2), found in Drosophila melanogaster (Fruit fly).